A 333-amino-acid chain; its full sequence is uncharacterized protein (333 aa).

This sequence belongs to the polysaccharide synthase family.

This is an uncharacterized protein from Methanocaldococcus jannaschii (strain ATCC 43067 / DSM 2661 / JAL-1 / JCM 10045 / NBRC 100440) (Methanococcus jannaschii).